A 226-amino-acid polypeptide reads, in one-letter code: Late protein I226R (226 aa).

The first 16 residues, 1–16 (MKMETFLVCLFHNAKG), serve as a signal peptide directing secretion. Residue Asn-164 is glycosylated (N-linked (GlcNAc...) asparagine; by host).

Belongs to the asfivirus I226R family.

In terms of biological role, plays a role in the inhibition of host NF-kappa-B and IRF3 signaling pathways. Mechanistically, promotes the degradation of host IKBKG through enhancing its ubiquitination leading to inhibition of both pathways. The polypeptide is Late protein I226R (Ornithodoros (relapsing fever ticks)).